The following is a 214-amino-acid chain: Putative ras-related protein Rab-5B (214 aa).

GTP is bound at residue 56-63; sequence GEMNTGKT. The Effector region signature appears at 77–85; sequence TDSTIGAAF. GTP is bound by residues 103-107 and 161-164; these read DTAGQ and NKVD.

The protein belongs to the small GTPase superfamily. Rab family. This sequence lacks the C-terminal cysteine motifs subject to isoprenylation in other Rab proteins.

The polypeptide is Putative ras-related protein Rab-5B (rab5B) (Dictyostelium discoideum (Social amoeba)).